The chain runs to 82 residues: Large ribosomal subunit protein bL27 (82 aa).

The interval 1–20 (MATKKAGGSSSNGRDSIGKR) is disordered.

The protein belongs to the bacterial ribosomal protein bL27 family.

The polypeptide is Large ribosomal subunit protein bL27 (Neorickettsia sennetsu (strain ATCC VR-367 / Miyayama) (Ehrlichia sennetsu)).